Consider the following 452-residue polypeptide: Ethanolamine kinase 1 (452 aa).

A disordered region spans residues 26–64 (AVQTRIGNSAASRRSPAARPPVPAPPALPRGRPGTEGST). Positions 43–53 (ARPPVPAPPAL) are enriched in pro residues.

Belongs to the choline/ethanolamine kinase family. In terms of tissue distribution, expressed in kidney, liver, placenta, heart, leukocyte, ovary and testis.

It is found in the cytoplasm. It catalyses the reaction ethanolamine + ATP = phosphoethanolamine + ADP + H(+). It functions in the pathway phospholipid metabolism; phosphatidylethanolamine biosynthesis; phosphatidylethanolamine from ethanolamine: step 1/3. Functionally, highly specific for ethanolamine phosphorylation. May be a rate-controlling step in phosphatidylethanolamine biosynthesis. The protein is Ethanolamine kinase 1 of Homo sapiens (Human).